The sequence spans 158 residues: MYEFKDYYQNTVQLSFDDQPFSDSPKHVWVICRFGGKWLLTEHEDRGYEFPGGKVEPMECAEEAALREVKEETGARVKSLKYLGQYKVLGKEKVIVKNIYFADIEKLEKQADYFETKGPVLFHELPENLSRNKKFSFIMKDSVLPISLKKLKESGWIE.

Residues 6 to 145 (DYYQNTVQLS…SFIMKDSVLP (140 aa)) enclose the Nudix hydrolase domain. A Nudix box motif is present at residues 53-74 (GKVEPMECAEEAALREVKEETG). The Mg(2+) site is built by E68 and E72.

This sequence belongs to the Nudix hydrolase family. Requires Mg(2+) as cofactor.

The catalysed reaction is 8-oxo-dGTP + H2O = 8-oxo-dGMP + diphosphate + H(+). With respect to regulation, not induced by oxidative damage (following treatment with paraquat or hydrogen peroxide). Not induced by mitomycin C. Not induced by sigma-B general stress inducers such as sodium chloride, ethanol or heat. In terms of biological role, involved in the GO system responsible for removing an oxidatively damaged form of guanine (7,8-dihydro-8-oxoguanine, 8-oxo-dGTP) from DNA and the nucleotide pool. 8-oxo-dGTP is inserted opposite dA and dC residues of template DNA with almost equal efficiency thus leading to A.T to G.C transversions. Functions, in conjunction with MutT, to protect vegetatively growing cells from DNA-damaging agents such as H(2)O(2) or t-BHP (t-butylhydroperoxide). The 2 proteins do not however protect spores. According to PubMed:15576788, phosphohydrolase that catalyzes the hydrolysis of all common nucleoside triphosphates as well as of the mutagenic analog 8-oxo-dGTP. The high catalytic efficiency on dGTP is in contrast to results from PubMed:14761999. According to PubMed:14761999, catalyzes the hydrolysis of 8-oxo-dGTP with a specific activity 413 times higher than that exhibited against dGTP. Preferentially catalyzes the hydrolysis of 8-oxo-dGTP and 8-oxo-GTP. According to PubMed:15576788, hydrolyzes nucleoside triphosphates in a stepwise fashion through the diphosphate to the monophosphate, releasing two molecules of inorganic orthophosphate. This chain is Putative 8-oxo-dGTP diphosphatase YtkD (ytkD), found in Bacillus subtilis (strain 168).